Consider the following 111-residue polypeptide: uncharacterized protein (111 aa).

It is found in the mitochondrion. This is an uncharacterized protein from Arabidopsis thaliana (Mouse-ear cress).